We begin with the raw amino-acid sequence, 349 residues long: Ferredoxin--NADP reductase 3 (349 aa).

FAD-binding residues include E34, K42, Y46, V86, I120, D287, and S328.

Belongs to the ferredoxin--NADP reductase type 2 family. As to quaternary structure, homodimer. FAD serves as cofactor.

It carries out the reaction 2 reduced [2Fe-2S]-[ferredoxin] + NADP(+) + H(+) = 2 oxidized [2Fe-2S]-[ferredoxin] + NADPH. The polypeptide is Ferredoxin--NADP reductase 3 (Lysinibacillus sphaericus (strain C3-41)).